The chain runs to 642 residues: uncharacterized protein (642 aa).

Mg(2+)-binding residues include E15 and D118. The region spanning 29 to 149 (VCVDTCVVID…YNLAKAQGIE (121 aa)) is the PINc domain. The 69-residue stretch at 510–578 (DNSIDLIVPE…ELESTRIYET (69 aa)) folds into the KH domain.

This sequence in the N-terminal section; belongs to the PINc/VapC protein family. Mg(2+) serves as cofactor.

This is an uncharacterized protein from Methanocaldococcus jannaschii (strain ATCC 43067 / DSM 2661 / JAL-1 / JCM 10045 / NBRC 100440) (Methanococcus jannaschii).